The sequence spans 278 residues: Probable endonuclease 4 (278 aa).

Residues His69, His109, Glu145, Asp179, His182, His214, Asp227, His229, and Glu259 each contribute to the Zn(2+) site.

It belongs to the AP endonuclease 2 family. Requires Zn(2+) as cofactor.

It carries out the reaction Endonucleolytic cleavage to 5'-phosphooligonucleotide end-products.. In terms of biological role, endonuclease IV plays a role in DNA repair. It cleaves phosphodiester bonds at apurinic or apyrimidinic (AP) sites, generating a 3'-hydroxyl group and a 5'-terminal sugar phosphate. In Bacteroides fragilis (strain ATCC 25285 / DSM 2151 / CCUG 4856 / JCM 11019 / LMG 10263 / NCTC 9343 / Onslow / VPI 2553 / EN-2), this protein is Probable endonuclease 4.